The primary structure comprises 92 residues: Small ribosomal subunit protein uS19 (92 aa).

The protein belongs to the universal ribosomal protein uS19 family.

Protein S19 forms a complex with S13 that binds strongly to the 16S ribosomal RNA. In Francisella tularensis subsp. tularensis (strain FSC 198), this protein is Small ribosomal subunit protein uS19.